Here is a 1267-residue protein sequence, read N- to C-terminus: Probable cation-transporting ATPase catp-6 (1267 aa).

Over 1 to 32 (MVEAGGARRHRMTLESGDHTLTLFAYRTGPFR) the chain is Extracellular. Residues 33–53 (TILFYALTVLTLGIFRLILHW) form a helical membrane-spanning segment. Residues 54 to 189 (KQKWDVKMRM…RNEIVVQLRP (136 aa)) lie on the Cytoplasmic side of the membrane. A helical membrane pass occupies residues 190 to 210 (ILYLLVMEVITPFYVFQIFSV). The Extracellular segment spans residues 211–217 (TVWYNDE). Residues 218 to 238 (YAYYASLIVILSLGSIVMDVY) traverse the membrane as a helical segment. At 239–390 (QIRTQEIRLR…DFRFTKDLFK (152 aa)) the chain is on the cytoplasmic side. Residues 391 to 411 (FILFLACISGCGFIYTIIVMI) form a helical membrane-spanning segment. Residues 412–424 (MRGNTLRRIIVRS) are Extracellular-facing. The helical transmembrane segment at 425 to 445 (LDIITITVPPALPAAMSVGII) threads the bilayer. The Cytoplasmic segment spans residues 446–950 (NAQLRLKKKE…VTSFGIFKYM (505 aa)). Asp-476 acts as the 4-aspartylphosphate intermediate in catalysis. Asp-891 and Asp-895 together coordinate Mg(2+). The chain crosses the membrane as a helical span at residues 951 to 971 (AGYSLTQFVTVMHLYWISNIL). At 972–976 (TDGQF) the chain is on the extracellular side. The helical transmembrane segment at 977 to 997 (MYIDMFLITMFALLFGNTPAF) threads the bilayer. At 998–1013 (YRLAHTPPPTRLLSIA) the chain is on the cytoplasmic side. Residues 1014-1034 (SMTSVVGQLIIIGVVQFIVFF) traverse the membrane as a helical segment. At 1035–1058 (STSQQPWFTPYQPPVDDEVEDKRS) the chain is on the extracellular side. A helical membrane pass occupies residues 1059–1079 (MQGTALFCVSMFQYIILALVY). Residues 1080–1097 (SKGPPFRGNLWSNKPMCA) lie on the Cytoplasmic side of the membrane. The chain crosses the membrane as a helical span at residues 1098-1118 (LTIFATLLCLFIVIWPTELVL). Residues 1119–1132 (KTLGNVELPSLTFR) lie on the Extracellular side of the membrane. A helical membrane pass occupies residues 1133–1153 (IFIVIVGAVNAAVSYGFETLF). Residues 1154–1267 (VDFFLLGYWE…EEPEKLERTY (114 aa)) lie on the Cytoplasmic side of the membrane. Residues 1232 to 1256 (ERLISRIGGEPTWLTNPIPPHSLSE) are disordered.

It belongs to the cation transport ATPase (P-type) (TC 3.A.3) family. Type V subfamily.

The protein localises to the membrane. The enzyme catalyses ATP + H2O = ADP + phosphate + H(+). The polypeptide is Probable cation-transporting ATPase catp-6 (Caenorhabditis elegans).